Consider the following 95-residue polypeptide: UPF0358 protein BCE_3996 (95 aa).

Belongs to the UPF0358 family.

This Bacillus cereus (strain ATCC 10987 / NRS 248) protein is UPF0358 protein BCE_3996.